We begin with the raw amino-acid sequence, 1303 residues long: Serine/threonine-protein kinase ULK4 (1303 aa).

One can recognise a Protein kinase domain in the interval 4-280 (FVLYEEIGRG…WEGVLQHPFW (277 aa)). D121 serves as the catalytic Proton acceptor. Disordered stretches follow at residues 304 to 332 (ECSGPHDSRELLQSPKNGQAKGQKAAHRL) and 369 to 401 (TSAMVELNPGEGEDPSSPQKTSPLSKMTSGHLS). The span at 384 to 400 (SSPQKTSPLSKMTSGHL) shows a compositional bias: polar residues. HEAT repeat units lie at residues 504–543 (RLLHSPLFQLLIQHLRIAPNWDIRSKVARVVGMLALHTTE), 727–765 (LIQEKDFVSTVIRLLDSPSTPIRAKAFLVLLYILIHNRD), 796–834 (NEYLARCLDLLIQHMVQEPPRILGDILNALANVSGRKHP), 926–964 (STVMDYILPPLVSLVQSQNVEWRLFSLRLLSETTTLLVS), 1025–1063 (LVEESKLVPLIFEVILEHQESILGNTMQSVIALLNNLVA), 1105–1143 (STLLASLLDILLGMLTYTSRIVRQALQVQKSGSRGDTQA), and 1151–1189 (SKPLTDLISLLIPLLPSEDPEISEVSSKCLSILVQLYGG).

Belongs to the protein kinase superfamily. Ser/Thr protein kinase family. APG1/unc-51/ULK1 subfamily. Expressed in embryonic and adult brain. In the brain, widely expressed, with highest levels in layers II/III and V of the cortex, piriform cortex, CA1-3 of hippocampus, dentate gyrus, ependymal cells lining the ventricles and choroid plexus, and in the thalamic reticular nucleus (at protein level).

It carries out the reaction L-seryl-[protein] + ATP = O-phospho-L-seryl-[protein] + ADP + H(+). The enzyme catalyses L-threonyl-[protein] + ATP = O-phospho-L-threonyl-[protein] + ADP + H(+). May be involved in the remodeling of cytoskeletal components, such as alpha-tubulin, and in this way regulates neurite branching and elongation, as well as cell motility. This chain is Serine/threonine-protein kinase ULK4 (Ulk4), found in Mus musculus (Mouse).